The sequence spans 75 residues: MARYFRRRKFCRFTAEGIQEIDYKDIAMLKNYITENGKIVPSRITGTRAKFQRQLSRAIKKARYLALLPYTDQHH.

Belongs to the bacterial ribosomal protein bS18 family. Part of the 30S ribosomal subunit. Forms a tight heterodimer with protein bS6.

Functionally, binds as a heterodimer with protein bS6 to the central domain of the 16S rRNA, where it helps stabilize the platform of the 30S subunit. This is Small ribosomal subunit protein bS18 from Buchnera aphidicola subsp. Schizaphis graminum (strain Sg).